Reading from the N-terminus, the 426-residue chain is Serine--tRNA ligase (426 aa).

A disordered region spans residues 36 to 66; that stretch reads KRRHLQERTQDLQSQRNTISKEIGQKKAKGE. Polar residues predominate over residues 46–55; that stretch reads DLQSQRNTIS. 233 to 235 provides a ligand contact to L-serine; it reads TAE. 264–266 is a binding site for ATP; it reads RSE. Glu287 lines the L-serine pocket. 351–354 serves as a coordination point for ATP; the sequence is EISS. Ser387 serves as a coordination point for L-serine.

Belongs to the class-II aminoacyl-tRNA synthetase family. Type-1 seryl-tRNA synthetase subfamily. As to quaternary structure, homodimer. The tRNA molecule binds across the dimer.

It localises to the cytoplasm. The enzyme catalyses tRNA(Ser) + L-serine + ATP = L-seryl-tRNA(Ser) + AMP + diphosphate + H(+). It carries out the reaction tRNA(Sec) + L-serine + ATP = L-seryl-tRNA(Sec) + AMP + diphosphate + H(+). Its pathway is aminoacyl-tRNA biosynthesis; selenocysteinyl-tRNA(Sec) biosynthesis; L-seryl-tRNA(Sec) from L-serine and tRNA(Sec): step 1/1. Its function is as follows. Catalyzes the attachment of serine to tRNA(Ser). Is also able to aminoacylate tRNA(Sec) with serine, to form the misacylated tRNA L-seryl-tRNA(Sec), which will be further converted into selenocysteinyl-tRNA(Sec). The chain is Serine--tRNA ligase from Francisella tularensis subsp. novicida (strain U112).